We begin with the raw amino-acid sequence, 256 residues long: MKKAHLTVQSNSEIADRIYKMVLKGELVRHLTEPGQFLHLKVSDAVTPLLRRPLSIADVNFAADEVSVIYRADGEGTRLLAGKKEGGRIDVLGPLGNGFPVRRIEPGKTALLVGGGVGVPPLQELSKRLTEKGVNVIHVLGFQSAKDVFYEQECRAYGDTYVATADGTYGEKGFVTDVIREKQLEFDVLLSCGPTPMLKALKQQYGHKEVYLSMEERMGCGIGACFACVCRTGESDTSYVKVCLDGPVFKAEEVAL.

The FAD-binding FR-type domain maps to 1-101 (MKKAHLTVQS…LGPLGNGFPV (101 aa)). FAD is bound by residues 52–55 (RPLS), 69–71 (IYR), and 76–77 (GT). [2Fe-2S] cluster-binding residues include C220, C225, C228, and C243.

The protein belongs to the PyrK family. In terms of assembly, heterotetramer of 2 PyrK and 2 PyrD type B subunits. [2Fe-2S] cluster serves as cofactor. FAD is required as a cofactor.

Its pathway is pyrimidine metabolism; UMP biosynthesis via de novo pathway; orotate from (S)-dihydroorotate (NAD(+) route): step 1/1. Responsible for channeling the electrons from the oxidation of dihydroorotate from the FMN redox center in the PyrD type B subunit to the ultimate electron acceptor NAD(+). The polypeptide is Dihydroorotate dehydrogenase B (NAD(+)), electron transfer subunit (Bacillus velezensis (strain DSM 23117 / BGSC 10A6 / LMG 26770 / FZB42) (Bacillus amyloliquefaciens subsp. plantarum)).